The sequence spans 927 residues: MSSTVLSVEPDALPRSGEDAAAIAEDARLRDDIRLLGRILGDTVRDQEGEDVFDAVERIRQTSIRFHRDNDQPARDELVELFDGLSTPATLRIVRAFSYFSHLANLAEDQNNIRQMRLQNGARPGSLVATLAHARAVGISAKELRHFFETALVSPVLTAHPTEVRRKSTMDREMEIARLLDRRERLQMTPEEIEQHEELLRRAVLTLWQTNMLRRTKLTVLDEVANGLSFYDYAFLHEVPRLHGVLEDKLNDDDGAGEELASFLRMGSWIGGDRDGNPFVTAEVMRGTLRLQSRRALRHYLDELHALGSELSIAAHLADISDELRALAENSPDTSPHRAGEPYRLAVSAIYARLAATAHRLGIDDIRAPVAESAPYAEPAELKADLDVLHRSLVANNSAVIARGRLRSLRRAVDCFGFHLASLDMRQNSAVHERTMAELIDKAMPGKSYMAMNEEARIALLAAELRSPRPLASPFVKYSEETVDELAVFRAAAEAHATFGPAAIPQCIISMTKGVSDLLEVVVLLKEVGLVDPAGRSAINVVPLFETIEDLQAAAGIMDRLLGLHDYRRLVDSRGGVQEVMLGYSDSNKDGGFVTSGWELYKAEIELLKIFEHHGVRMRLFHGRGGSVGRGGGPSYDAILAQPAGAVNGQIRITEQGEIITSKYSNPEVGRNNLEVLAAATLEASLLQPRLGAPCVGYLKAMDEISALAFKAYRGLVYETEGFEDYFWSSTVITEIATLNIGSRPASRKKTHKIEDLRAIPWVFSWAQCRLMLPGWYGFGSAVEAWVKAHPEQGMAYLQELNREWPFFRTLLSNMDMVLSKSSIAIASRYAELVADEKLRAAIFGRIKREWHSSIAALLAIMGHQRLLQGNPRLERSIRHRFPYLDPLNHVQVELLKQHRDHAVDEQALRGIQITINGISAGLRNSG.

Catalysis depends on residues His160 and Lys589.

Belongs to the PEPCase type 1 family. Requires Mg(2+) as cofactor.

It carries out the reaction oxaloacetate + phosphate = phosphoenolpyruvate + hydrogencarbonate. In terms of biological role, forms oxaloacetate, a four-carbon dicarboxylic acid source for the tricarboxylic acid cycle. The polypeptide is Phosphoenolpyruvate carboxylase (Rhodopseudomonas palustris (strain BisA53)).